We begin with the raw amino-acid sequence, 166 residues long: Lipoprotein signal peptidase (166 aa).

The next 3 membrane-spanning stretches (helical) occupy residues 10 to 30, 68 to 88, and 94 to 114; these read LIWL…KAWV, WQLW…AFWL, and GHWR…GNVI. Residues aspartate 124 and aspartate 142 contribute to the active site. A helical transmembrane segment spans residues 138–158; that stretch reads FNIADSAIVGGAIGIAVFGLF.

This sequence belongs to the peptidase A8 family.

Its subcellular location is the cell inner membrane. The enzyme catalyses Release of signal peptides from bacterial membrane prolipoproteins. Hydrolyzes -Xaa-Yaa-Zaa-|-(S,diacylglyceryl)Cys-, in which Xaa is hydrophobic (preferably Leu), and Yaa (Ala or Ser) and Zaa (Gly or Ala) have small, neutral side chains.. Its pathway is protein modification; lipoprotein biosynthesis (signal peptide cleavage). Its function is as follows. This protein specifically catalyzes the removal of signal peptides from prolipoproteins. This chain is Lipoprotein signal peptidase, found in Xanthomonas oryzae pv. oryzae (strain MAFF 311018).